A 181-amino-acid chain; its full sequence is Adenylate kinase 2 (181 aa).

10–15 contacts ATP; it reads GSGKST. Residues 30–59 form an NMP region; it reads SMGGILREAIANATPLGIKAKPYVERGDLL. Residues R36, 57 to 59, 85 to 88, and Q92 each bind AMP; these read DLL and GYPR. Residues 126-132 are LID; sequence NRSLFDD. An ATP-binding site is contributed by R127. AMP is bound at residue R140. P168 is a binding site for ATP.

Belongs to the adenylate kinase family. As to quaternary structure, monomer.

The protein resides in the cytoplasm. It catalyses the reaction AMP + ATP = 2 ADP. It participates in purine metabolism; AMP biosynthesis via salvage pathway; AMP from ADP: step 1/1. Its function is as follows. Catalyzes the reversible transfer of the terminal phosphate group between ATP and AMP. Plays an important role in cellular energy homeostasis and in adenine nucleotide metabolism. In Synechocystis sp. (strain ATCC 27184 / PCC 6803 / Kazusa), this protein is Adenylate kinase 2.